The chain runs to 341 residues: Pre-mRNA-processing protein 45 (341 aa).

Disordered regions lie at residues 1–31, 181–226, and 302–341; these read MFSS…HEKS, NYQE…EDQA, and EQHE…KTKY. Over residues 192–201 the composition is skewed to basic residues; sequence FKLRKNRHKN. Basic and acidic residues predominate over residues 302-318; the sequence is EQHEKENKLKELADIAR.

It belongs to the SNW family. As to quaternary structure, associated with the spliceosome.

The protein resides in the nucleus. Functionally, involved in pre-mRNA splicing. This is Pre-mRNA-processing protein 45 (PRP45) from Debaryomyces hansenii (strain ATCC 36239 / CBS 767 / BCRC 21394 / JCM 1990 / NBRC 0083 / IGC 2968) (Yeast).